A 196-amino-acid chain; its full sequence is MAAPGPGEYFSVGSHVSCLTCLGQRLQGEVVAFDYPSKMLTLKCPSSSGKPNLSDVILINLAYVSEVDIINDRTETPPPLASLNISKLANRARTEKEDKLSQAYAISAGVSIEGQQLFQTIHKTIKDCKWQEKNIIVMDDVVISPPYQVENCKGKEGSALSHIRKIVEKHFRDVESQKTMQRSQAQQTQKDSSLSS.

In terms of domain architecture, Sm spans 3 to 73 (APGPGEYFSV…VSEVDIINDR (71 aa)). The AD domain maps to 81–175 (ASLNISKLAN…IVEKHFRDVE (95 aa)). The disordered stretch occupies residues 174-196 (VESQKTMQRSQAQQTQKDSSLSS). Over residues 177–196 (QKTMQRSQAQQTQKDSSLSS) the composition is skewed to polar residues.

Belongs to the LSM12 family.

This Danio rerio (Zebrafish) protein is Protein LSM12 homolog A (lsm12a).